Consider the following 1160-residue polypeptide: Protein GIGANTEA (1160 aa).

A compositionally biased stretch (polar residues) spans C158 to E169. Disordered stretches follow at residues C158–L188, G600–C629, and P800–H830. Positions S170 to P187 are enriched in basic and acidic residues. Over residues V801–N812 the composition is skewed to basic and acidic residues.

This sequence belongs to the GIGANTEA family.

It is found in the nucleus. In terms of biological role, involved in regulation of circadian rhythm, and in the control of the photoperiodic flowering. Acts as a suppressor of flowering under short-day (SD) and long-day (LD) conditions. Activates Hd1/CONSTANS gene. The chain is Protein GIGANTEA (GI) from Oryza sativa subsp. japonica (Rice).